The sequence spans 181 residues: Caltractin ICL1a (181 aa).

The interval 1–29 (MARRGQQPPPQQAPPAQKNQPGKFNPAEF) is disordered. Positions 14-23 (PPAQKNQPGK) are enriched in low complexity. EF-hand domains lie at 37–72 (EEVLEIKEAFDLFDTDGTQSIDPKELKAAMTSLGFE), 73–108 (AKNQTIYQMISDLDTDGSGQIDFAEFLKLMTARISE), 110–145 (DSKADIQKVFNLFDSERAGVVTLKDLRKVAKELGET), and 146–181 (MDDSELQEMIDRADSDGDAQVTFEDFYNIMTKKTFA). Residues D50, D52, T54, S56, E61, D86, D88, S90, Q92, and E97 each coordinate Ca(2+).

The protein belongs to the centrin family. Monomer.

It localises to the cytoplasm. Its subcellular location is the cytoskeleton. Functionally, plays a fundamental role in microtubule organizing center structure and function. Component of the infraciliary lattice (ICL) and the ciliary basal bodies. The polypeptide is Caltractin ICL1a (Icl1a) (Paramecium tetraurelia).